A 318-amino-acid polypeptide reads, in one-letter code: Acetyl-coenzyme A carboxylase carboxyl transferase subunit alpha (318 aa).

One can recognise a CoA carboxyltransferase C-terminal domain in the interval L39 to G292.

It belongs to the AccA family. Acetyl-CoA carboxylase is a heterohexamer composed of biotin carboxyl carrier protein (AccB), biotin carboxylase (AccC) and two subunits each of ACCase subunit alpha (AccA) and ACCase subunit beta (AccD).

It localises to the cytoplasm. It catalyses the reaction N(6)-carboxybiotinyl-L-lysyl-[protein] + acetyl-CoA = N(6)-biotinyl-L-lysyl-[protein] + malonyl-CoA. It participates in lipid metabolism; malonyl-CoA biosynthesis; malonyl-CoA from acetyl-CoA: step 1/1. Its function is as follows. Component of the acetyl coenzyme A carboxylase (ACC) complex. First, biotin carboxylase catalyzes the carboxylation of biotin on its carrier protein (BCCP) and then the CO(2) group is transferred by the carboxyltransferase to acetyl-CoA to form malonyl-CoA. The sequence is that of Acetyl-coenzyme A carboxylase carboxyl transferase subunit alpha from Acidiphilium cryptum (strain JF-5).